The chain runs to 277 residues: Carbonyl reductase [NADPH] 3 (277 aa).

Residue S2 is modified to N-acetylserine. NADP(+)-binding positions include 10 to 34 (VTGANKGIGFAITRDLCRKFSGDVV), 38 to 42 (RDEAR), 63 to 64 (DI), and N90. At S30 the chain carries Phosphoserine. S140 is a binding site for substrate. Y194 functions as the Proton acceptor in the catalytic mechanism. 194–198 (YGVSK) is an NADP(+) binding site.

This sequence belongs to the short-chain dehydrogenases/reductases (SDR) family.

The protein localises to the cytoplasm. It catalyses the reaction a secondary alcohol + NADP(+) = a ketone + NADPH + H(+). The enzyme catalyses a quinone + NADPH + H(+) = a quinol + NADP(+). Its function is as follows. Catalyzes the NADPH-dependent reduction of carbonyl compounds to their corresponding alcohols. Has low NADPH-dependent oxidoreductase activity. Acts on several orthoquinones, as well as on non-quinone compounds, such as isatin or on the anticancer drug oracin. Best substrates for CBR3 is 1,2- naphthoquinone, hence could play a role in protection against cytotoxicity of exogenous quinones. Exerts activity toward ortho-quinones but not paraquinones. No endogenous substrate for CBR3 except isatin has been identified. The polypeptide is Carbonyl reductase [NADPH] 3 (Rattus norvegicus (Rat)).